The chain runs to 473 residues: GTPase Der (473 aa).

EngA-type G domains are found at residues 3-167 and 203-378; these read FTVA…GKDR and LRVA…RVWN. GTP is bound by residues 9–16, 56–60, 119–122, 209–216, 256–260, and 321–324; these read GRPNVGKS, DTAGL, NKSE, GRPNAGKS, DTAGM, and NKWD. The KH-like domain maps to 379-463; sequence KRISTARLNR…PIRIHFRSAE (85 aa).

This sequence belongs to the TRAFAC class TrmE-Era-EngA-EngB-Septin-like GTPase superfamily. EngA (Der) GTPase family. In terms of assembly, associates with the 50S ribosomal subunit.

Its function is as follows. GTPase that plays an essential role in the late steps of ribosome biogenesis. This chain is GTPase Der, found in Rhizobium etli (strain CIAT 652).